A 153-amino-acid polypeptide reads, in one-letter code: Aspartate carbamoyltransferase regulatory chain (153 aa).

Zn(2+)-binding residues include cysteine 109, cysteine 114, cysteine 138, and cysteine 141.

The protein belongs to the PyrI family. As to quaternary structure, contains catalytic and regulatory chains. Requires Zn(2+) as cofactor.

Involved in allosteric regulation of aspartate carbamoyltransferase. This is Aspartate carbamoyltransferase regulatory chain from Nitrosopumilus maritimus (strain SCM1).